The following is a 245-amino-acid chain: 3-deoxy-manno-octulosonate cytidylyltransferase (245 aa).

It belongs to the KdsB family.

The protein resides in the cytoplasm. The enzyme catalyses 3-deoxy-alpha-D-manno-oct-2-ulosonate + CTP = CMP-3-deoxy-beta-D-manno-octulosonate + diphosphate. It functions in the pathway nucleotide-sugar biosynthesis; CMP-3-deoxy-D-manno-octulosonate biosynthesis; CMP-3-deoxy-D-manno-octulosonate from 3-deoxy-D-manno-octulosonate and CTP: step 1/1. The protein operates within bacterial outer membrane biogenesis; lipopolysaccharide biosynthesis. Activates KDO (a required 8-carbon sugar) for incorporation into bacterial lipopolysaccharide in Gram-negative bacteria. The protein is 3-deoxy-manno-octulosonate cytidylyltransferase of Rhodopseudomonas palustris (strain TIE-1).